Reading from the N-terminus, the 208-residue chain is Ribosome maturation factor RimP (208 aa).

The segment at Thr165–Lys208 is disordered. 2 stretches are compositionally biased toward basic and acidic residues: residues Gln174–Leu188 and Lys198–Lys208.

This sequence belongs to the RimP family.

The protein localises to the cytoplasm. Its function is as follows. Required for maturation of 30S ribosomal subunits. The chain is Ribosome maturation factor RimP from Sorangium cellulosum (strain So ce56) (Polyangium cellulosum (strain So ce56)).